The following is an 860-amino-acid chain: DNA mismatch repair protein MutS (860 aa).

618-625 (GPNMGGKS) contacts ATP.

The protein belongs to the DNA mismatch repair MutS family.

This protein is involved in the repair of mismatches in DNA. It is possible that it carries out the mismatch recognition step. This protein has a weak ATPase activity. In Hahella chejuensis (strain KCTC 2396), this protein is DNA mismatch repair protein MutS.